Consider the following 109-residue polypeptide: Transcription initiation factor IIA subunit 2 (109 aa).

It belongs to the TFIIA subunit 2 family. TFIIA is a heterodimer of the large unprocessed subunit 1 and a small subunit gamma. It was originally believed to be a heterotrimer of an alpha (p35), a beta (p19) and a gamma subunit (p12). Interacts with NCOA6 general coactivator. TFIIA forms a complex with TBP. Interacts with HSF1 (via transactivation domain). Part of TBP-based Pol II pre-initiation complex (PIC), in which Pol II core assembles with general transcription factors and other specific initiation factors including GTF2E1, GTF2E2, GTF2F1, GTF2F2, TCEA1, ERCC2, ERCC3, GTF2H2, GTF2H3, GTF2H4, GTF2H5, GTF2A1, GTF2A2, GTF2B and TBP; this large multi-subunit PIC complex mediates DNA unwinding and targets Pol II core to the transcription start site where the first phosphodiester bond forms. As to quaternary structure, (Microbial infection) Interacts with SV40 Large T antigen.

It is found in the nucleus. In terms of biological role, TFIIA is a component of the transcription machinery of RNA polymerase II and plays an important role in transcriptional activation. TFIIA in a complex with TBP mediates transcriptional activity. The polypeptide is Transcription initiation factor IIA subunit 2 (GTF2A2) (Homo sapiens (Human)).